A 601-amino-acid polypeptide reads, in one-letter code: Elongation factor 4 (601 aa).

In terms of domain architecture, tr-type G spans Glu-6–Glu-188. Residues Asp-18–Thr-23 and Asn-135–Asp-138 each bind GTP.

Belongs to the TRAFAC class translation factor GTPase superfamily. Classic translation factor GTPase family. LepA subfamily.

The protein localises to the cell inner membrane. The catalysed reaction is GTP + H2O = GDP + phosphate + H(+). Its function is as follows. Required for accurate and efficient protein synthesis under certain stress conditions. May act as a fidelity factor of the translation reaction, by catalyzing a one-codon backward translocation of tRNAs on improperly translocated ribosomes. Back-translocation proceeds from a post-translocation (POST) complex to a pre-translocation (PRE) complex, thus giving elongation factor G a second chance to translocate the tRNAs correctly. Binds to ribosomes in a GTP-dependent manner. The sequence is that of Elongation factor 4 from Hydrogenovibrio crunogenus (strain DSM 25203 / XCL-2) (Thiomicrospira crunogena).